Reading from the N-terminus, the 132-residue chain is Interleukin-4 (132 aa).

Positions 1–24 are cleaved as a signal peptide; it reads MGLTSQLIPTLVCLLALTSTFVHG. N28, N45, N62, and N101 each carry an N-linked (GlcNAc...) asparagine glycan. 2 disulfide bridges follow: C48–C84 and C70–C104.

It belongs to the IL-4/IL-13 family.

It is found in the secreted. Its function is as follows. Participates in at least several B-cell activation processes as well as of other cell types. It is a costimulator of DNA-synthesis. It induces the expression of class II MHC molecules on resting B-cells. It enhances both secretion and cell surface expression of IgE and IgG1. It also regulates the expression of the low affinity Fc receptor for IgE (CD23) on both lymphocytes and monocytes. Positively regulates IL31RA expression in macrophages. Stimulates autophagy in dendritic cells by interfering with mTORC1 signaling and through the induction of RUFY4. This is Interleukin-4 (IL4) from Ailuropoda melanoleuca (Giant panda).